The chain runs to 361 residues: Histidinol-phosphate aminotransferase (361 aa).

At K218 the chain carries N6-(pyridoxal phosphate)lysine.

It belongs to the class-II pyridoxal-phosphate-dependent aminotransferase family. Histidinol-phosphate aminotransferase subfamily. In terms of assembly, homodimer. Requires pyridoxal 5'-phosphate as cofactor.

The enzyme catalyses L-histidinol phosphate + 2-oxoglutarate = 3-(imidazol-4-yl)-2-oxopropyl phosphate + L-glutamate. The protein operates within amino-acid biosynthesis; L-histidine biosynthesis; L-histidine from 5-phospho-alpha-D-ribose 1-diphosphate: step 7/9. The chain is Histidinol-phosphate aminotransferase from Dinoroseobacter shibae (strain DSM 16493 / NCIMB 14021 / DFL 12).